Here is a 101-residue protein sequence, read N- to C-terminus: Ubiquitin-related modifier 1 homolog (101 aa).

Position 101 is a 1-thioglycine (glycine 101). Glycine 101 participates in a covalent cross-link: Glycyl lysine isopeptide (Gly-Lys) (interchain with K-? in acceptor proteins).

It belongs to the URM1 family. As to quaternary structure, interacts with cer. Post-translationally, C-terminal thiocarboxylation occurs in 2 steps, it is first acyl-adenylated (-COAMP) via the hesA/moeB/thiF part of the MOCS3 homolog, then thiocarboxylated (-COSH) via the rhodanese domain of the MOCS3 homolog.

The protein resides in the cytoplasm. It functions in the pathway tRNA modification; 5-methoxycarbonylmethyl-2-thiouridine-tRNA biosynthesis. Acts as a sulfur carrier required for 2-thiolation of mcm(5)S(2)U at tRNA wobble positions of cytosolic tRNA(Lys), tRNA(Glu) and tRNA(Gln). Serves as sulfur donor in tRNA 2-thiolation reaction by being thiocarboxylated (-COSH) at its C-terminus by MOCS3. The sulfur is then transferred to tRNA to form 2-thiolation of mcm(5)S(2)U. Also acts as a ubiquitin-like protein (UBL) that is covalently conjugated via an isopeptide bond to lysine residues of target proteins such as Prx2/Jafrac1, Ciao1, Eip71CD and GILT1. The thiocarboxylated form serves as substrate for conjugation and oxidative stress specifically induces the formation of UBL-protein conjugates. The protein is Ubiquitin-related modifier 1 homolog of Drosophila sechellia (Fruit fly).